We begin with the raw amino-acid sequence, 118 residues long: Large ribosomal subunit protein bL20 (118 aa).

It belongs to the bacterial ribosomal protein bL20 family.

Functionally, binds directly to 23S ribosomal RNA and is necessary for the in vitro assembly process of the 50S ribosomal subunit. It is not involved in the protein synthesizing functions of that subunit. This chain is Large ribosomal subunit protein bL20, found in Gluconobacter oxydans (strain 621H) (Gluconobacter suboxydans).